The sequence spans 236 residues: UPF0502 protein Bamb_4889 (236 aa).

It belongs to the UPF0502 family.

The sequence is that of UPF0502 protein Bamb_4889 from Burkholderia ambifaria (strain ATCC BAA-244 / DSM 16087 / CCUG 44356 / LMG 19182 / AMMD) (Burkholderia cepacia (strain AMMD)).